We begin with the raw amino-acid sequence, 206 residues long: Imidazoleglycerol-phosphate dehydratase (206 aa).

Belongs to the imidazoleglycerol-phosphate dehydratase family.

Its subcellular location is the cytoplasm. The catalysed reaction is D-erythro-1-(imidazol-4-yl)glycerol 3-phosphate = 3-(imidazol-4-yl)-2-oxopropyl phosphate + H2O. It participates in amino-acid biosynthesis; L-histidine biosynthesis; L-histidine from 5-phospho-alpha-D-ribose 1-diphosphate: step 6/9. In Mycolicibacterium smegmatis (strain ATCC 700084 / mc(2)155) (Mycobacterium smegmatis), this protein is Imidazoleglycerol-phosphate dehydratase.